We begin with the raw amino-acid sequence, 93 residues long: Co-chaperonin GroES (93 aa).

The protein belongs to the GroES chaperonin family. As to quaternary structure, heptamer of 7 subunits arranged in a ring. Interacts with the chaperonin GroEL.

The protein resides in the cytoplasm. Functionally, together with the chaperonin GroEL, plays an essential role in assisting protein folding. The GroEL-GroES system forms a nano-cage that allows encapsulation of the non-native substrate proteins and provides a physical environment optimized to promote and accelerate protein folding. GroES binds to the apical surface of the GroEL ring, thereby capping the opening of the GroEL channel. This chain is Co-chaperonin GroES, found in Streptococcus intermedius.